A 373-amino-acid polypeptide reads, in one-letter code: Transaldolase (373 aa).

The Schiff-base intermediate with substrate role is filled by lysine 143.

This sequence belongs to the transaldolase family. Type 2 subfamily.

The protein localises to the cytoplasm. It carries out the reaction D-sedoheptulose 7-phosphate + D-glyceraldehyde 3-phosphate = D-erythrose 4-phosphate + beta-D-fructose 6-phosphate. It functions in the pathway carbohydrate degradation; pentose phosphate pathway; D-glyceraldehyde 3-phosphate and beta-D-fructose 6-phosphate from D-ribose 5-phosphate and D-xylulose 5-phosphate (non-oxidative stage): step 2/3. In terms of biological role, transaldolase is important for the balance of metabolites in the pentose-phosphate pathway. The polypeptide is Transaldolase (Mycolicibacterium paratuberculosis (strain ATCC BAA-968 / K-10) (Mycobacterium paratuberculosis)).